Reading from the N-terminus, the 121-residue chain is MSDPDILFRLAETIEARKQSDPHASYVAKLLHDGRDKILKKIAEESAEVLLASKDGDSTHVVRETADLWFHCLVLLAHHNLKLGDVLDELRRREGVSGIDEKAARKAGLADNGIGRMNQDK.

The protein belongs to the PRA-PH family.

It is found in the cytoplasm. The catalysed reaction is 1-(5-phospho-beta-D-ribosyl)-ATP + H2O = 1-(5-phospho-beta-D-ribosyl)-5'-AMP + diphosphate + H(+). The protein operates within amino-acid biosynthesis; L-histidine biosynthesis; L-histidine from 5-phospho-alpha-D-ribose 1-diphosphate: step 2/9. This Nitrosospira multiformis (strain ATCC 25196 / NCIMB 11849 / C 71) protein is Phosphoribosyl-ATP pyrophosphatase.